The sequence spans 478 residues: Poly(A) RNA polymerase cid11 (478 aa).

2 residues coordinate Mg(2+): aspartate 106 and aspartate 108. The 55-residue stretch at 263 to 317 folds into the PAP-associated domain; sequence SLGRLLIDFFYYYGFSFNYLDSVVSVRSGTVLNKQEKGWAMEVNNSLCVEEPFNT. The interval 428 to 447 is disordered; the sequence is QSYENKANRDSDFQGQTSLT.

Belongs to the DNA polymerase type-B-like family. Mg(2+) is required as a cofactor. The cofactor is Mn(2+).

The protein resides in the cytoplasm. It is found in the nucleus. It catalyses the reaction RNA(n) + ATP = RNA(n)-3'-adenine ribonucleotide + diphosphate. The chain is Poly(A) RNA polymerase cid11 (cid11) from Schizosaccharomyces pombe (strain 972 / ATCC 24843) (Fission yeast).